Reading from the N-terminus, the 247-residue chain is Ribonuclease 3 (247 aa).

Residues 21–149 (FKKLSKKIGI…LVGAIYLDRG (129 aa)) enclose the RNase III domain. Glutamate 62 is a Mg(2+) binding site. The active site involves aspartate 66. Residues asparagine 135 and glutamate 138 each contribute to the Mg(2+) site. Residue glutamate 138 is part of the active site. The DRBM domain maps to 176-245 (DYKTQLQEYS…AKELYIRIRR (70 aa)).

The protein belongs to the ribonuclease III family. As to quaternary structure, homodimer. The cofactor is Mg(2+).

The protein localises to the cytoplasm. The enzyme catalyses Endonucleolytic cleavage to 5'-phosphomonoester.. Functionally, digests double-stranded RNA. Involved in the processing of primary rRNA transcript to yield the immediate precursors to the large and small rRNAs (23S and 16S). Processes some mRNAs, and tRNAs when they are encoded in the rRNA operon. Processes pre-crRNA and tracrRNA of type II CRISPR loci if present in the organism. The polypeptide is Ribonuclease 3 (Leptospira borgpetersenii serovar Hardjo-bovis (strain L550)).